We begin with the raw amino-acid sequence, 125 residues long: Ribosome-binding factor A (125 aa).

It belongs to the RbfA family. Monomer. Binds 30S ribosomal subunits, but not 50S ribosomal subunits or 70S ribosomes.

The protein localises to the cytoplasm. Functionally, one of several proteins that assist in the late maturation steps of the functional core of the 30S ribosomal subunit. Associates with free 30S ribosomal subunits (but not with 30S subunits that are part of 70S ribosomes or polysomes). Required for efficient processing of 16S rRNA. May interact with the 5'-terminal helix region of 16S rRNA. The sequence is that of Ribosome-binding factor A from Wigglesworthia glossinidia brevipalpis.